The following is a 234-amino-acid chain: C2H2-type zinc-finger transcription factor clz7 (234 aa).

2 disordered regions span residues 45–99 (RPEG…SRVD) and 118–154 (SAQP…NGTA). 2 stretches are compositionally biased toward low complexity: residues 66-77 (SQSSNTSPTSES) and 140-154 (SSGT…NGTA). The segment at 159–184 (NRCWDHGCNGKKFLNHSNLVRHRREN) adopts a C2H2-type 1; degenerate zinc-finger fold. A C2H2-type 2; degenerate zinc finger spans residues 191–223 (FICPMCGAYFSRSTARNQHLEKKSCNRVRRYSN).

This sequence belongs to the GLI C2H2-type zinc-finger protein family.

It localises to the nucleus. Functionally, transcription factor that probably regulates the expression of the gene cluster that mediates the biosynthesis of squalestatin S1 (SQS1, also known as zaragozic acid A), a heavily oxidized fungal polyketide that offers potent cholesterol lowering activity by targeting squalene synthase (SS). The protein is C2H2-type zinc-finger transcription factor clz7 of Cochliobolus lunatus (Filamentous fungus).